The sequence spans 327 residues: Complex I intermediate-associated protein 30, mitochondrial (327 aa).

Residues 1–24 constitute a mitochondrion transit peptide; sequence MALVHKLLRDTYILRKFSKPTSAL. The segment at 42 to 63 is disordered; sequence PVASPGKASSQRKTEGDLQGDH. The span at 53 to 63 shows a compositional bias: basic and acidic residues; that stretch reads RKTEGDLQGDH. Serine 318 is modified (phosphoserine).

This sequence belongs to the CIA30 family. In terms of assembly, part of the mitochondrial complex I assembly/MCIA complex that comprises at least the core subunits TMEM126B, NDUFAF1, ECSIT and ACAD9 and complement subunits such as COA1 and TMEM186. Interacts with ECSIT. Interacts with ACAD9. At early stages of complex I assembly, it is found in intermediate subcomplexes that contain different subunits including NDUFB6, NDUFA6, NDUFA9, NDUFS3, NDUFS7, ND1, ND2 and ND3. Interacts with TMEM70 and TMEM242.

Its subcellular location is the mitochondrion. The protein localises to the mitochondrion matrix. Functionally, as part of the MCIA complex, involved in the assembly of the mitochondrial complex I. This Gorilla gorilla gorilla (Western lowland gorilla) protein is Complex I intermediate-associated protein 30, mitochondrial.